We begin with the raw amino-acid sequence, 248 residues long: NADP-dependent 3-hydroxy acid dehydrogenase YdfG (248 aa).

NADP(+) is bound by residues 7 to 12 (GATAGF), 32 to 33 (RR), 54 to 55 (DV), and N81. Residue S134 coordinates substrate. Residues Y147, K151, and 177–185 (PGLVGGTEF) contribute to the NADP(+) site. The Proton acceptor role is filled by Y147.

It belongs to the short-chain dehydrogenases/reductases (SDR) family. Homotetramer.

The enzyme catalyses 3-hydroxypropanoate + NADP(+) = 3-oxopropanoate + NADPH + H(+). It carries out the reaction L-allo-threonine + NADP(+) = aminoacetone + CO2 + NADPH. NADP-dependent dehydrogenase with broad substrate specificity acting on 3-hydroxy acids. Catalyzes the NADP-dependent oxidation of L-allo-threonine to L-2-amino-3-keto-butyrate, which is spontaneously decarboxylated into aminoacetone. Also acts on D-threonine, L-serine, D-serine, D-3-hydroxyisobutyrate, L-3-hydroxyisobutyrate, D-glycerate and L-glycerate. Able to catalyze the reduction of the malonic semialdehyde to 3-hydroxypropionic acid. YdfG is apparently supplementing RutE, the presumed malonic semialdehyde reductase involved in pyrimidine degradation since both are able to detoxify malonic semialdehyde. This is NADP-dependent 3-hydroxy acid dehydrogenase YdfG from Escherichia coli (strain K12).